Here is an 88-residue protein sequence, read N- to C-terminus: MAVVLRLSRAGTHKAPFYHVVATDSRNARDGKYIEDVGIYDPTQQPERIELKAERIEHWLKVGATPSQTVAMILKRAKKTAQPAEKKA.

The protein belongs to the bacterial ribosomal protein bS16 family.

In Anaeromyxobacter sp. (strain Fw109-5), this protein is Small ribosomal subunit protein bS16.